The chain runs to 262 residues: Acyl-[acyl-carrier-protein]--UDP-N-acetylglucosamine O-acyltransferase (262 aa).

The protein belongs to the transferase hexapeptide repeat family. LpxA subfamily. As to quaternary structure, homotrimer.

It localises to the cytoplasm. It carries out the reaction a (3R)-hydroxyacyl-[ACP] + UDP-N-acetyl-alpha-D-glucosamine = a UDP-3-O-[(3R)-3-hydroxyacyl]-N-acetyl-alpha-D-glucosamine + holo-[ACP]. The protein operates within glycolipid biosynthesis; lipid IV(A) biosynthesis; lipid IV(A) from (3R)-3-hydroxytetradecanoyl-[acyl-carrier-protein] and UDP-N-acetyl-alpha-D-glucosamine: step 1/6. In terms of biological role, involved in the biosynthesis of lipid A, a phosphorylated glycolipid that anchors the lipopolysaccharide to the outer membrane of the cell. This Burkholderia thailandensis (strain ATCC 700388 / DSM 13276 / CCUG 48851 / CIP 106301 / E264) protein is Acyl-[acyl-carrier-protein]--UDP-N-acetylglucosamine O-acyltransferase.